Reading from the N-terminus, the 199-residue chain is Recombination protein RecR (199 aa).

The C4-type zinc finger occupies 57–72 (CQSCRTYTEETLCPIC). The region spanning 81–176 (STICVVETPA…MISRIAHGVP (96 aa)) is the Toprim domain.

This sequence belongs to the RecR family.

Functionally, may play a role in DNA repair. It seems to be involved in an RecBC-independent recombinational process of DNA repair. It may act with RecF and RecO. The chain is Recombination protein RecR from Shewanella putrefaciens (strain CN-32 / ATCC BAA-453).